We begin with the raw amino-acid sequence, 135 residues long: MRIFTRLLYAAPSNMGSAASLSEALALLPPIPLYRRILRVHRKKLDPEMRILGDSYVKSEFRAHRGTENPLHIIGFLTEWQLYAQKLEGDSWIGEKLDQGKLDKMSDQQLGQLYELMQTIQNKDGKGEGEGESEK.

A mitochondrion-targeting transit peptide spans 1–12 (MRIFTRLLYAAP).

This sequence belongs to the complex I LYR family. SDHAF3 subfamily. Interacts with the iron-sulfur protein subunit within the SDH catalytic dimer.

The protein localises to the mitochondrion matrix. Its function is as follows. Plays an essential role in the assembly of succinate dehydrogenase (SDH), an enzyme complex (also referred to as respiratory complex II) that is a component of both the tricarboxylic acid (TCA) cycle and the mitochondrial electron transport chain, and which couples the oxidation of succinate to fumarate with the reduction of ubiquinone (coenzyme Q) to ubiquinol. Promotes maturation of the iron-sulfur protein subunit of the SDH catalytic dimer, protecting it from the deleterious effects of oxidants. May act together with SDHAF1. The polypeptide is Succinate dehydrogenase assembly factor 3, mitochondrial (Emericella nidulans (strain FGSC A4 / ATCC 38163 / CBS 112.46 / NRRL 194 / M139) (Aspergillus nidulans)).